Reading from the N-terminus, the 194-residue chain is Calcium channel flower (194 aa).

3 consecutive transmembrane segments (helical) span residues Leu34–Ile54, Val59–Glu79, and Gly107–Phe127.

The protein belongs to the calcium channel flower family. As to quaternary structure, homomultimer. Associates with the dally/ magu complex.

The protein resides in the cell membrane. It is found in the cytoplasmic vesicle. It localises to the secretory vesicle. The protein localises to the synaptic vesicle membrane. Its subcellular location is the presynaptic cell membrane. The protein resides in the endosome. With respect to regulation, channel activity is inhibited by La(3+), which reduces Ca(2+) influx and thus inhibits it's function in promoting activity-dependent bulk endocytosis (ADBE) in response to high stimuli. Functionally, transmembrane protein which mediates synaptic endocytosis, fitness-based cell culling, neuronal culling, morphogen gradient scaling, and calcium transport. Regulates synaptic endocytosis and hence couples exo- with endocytosis. Controls two major modes of synaptic vesicle (SV) endocytosis in the synaptic boutons of neuromuscular junctions (NMJs); Ca(2+) channel-independent Clathrin-mediated endocytosis (CME) in response to mild stimulation, and Ca(2+) channel-dependent activity-dependent bulk endocytosis (ADBE) in response to strong stimulation. Functions in ADBE and subsequent SV reformation from bulk endosomes by initiating Ca(2+) channel-dependent phosphatidylinositol 4,5-bisphosphate (PtdIns(4,5)P2) compartmentalization in synaptic boutons. There it acts at the periactive zone to provide the low Ca(2+) levels required to initiate Calcineurin activation and upregulate PtdIns(4,5)P2. Conversely PtdIns(4,5)P2 enhances fwe Ca(2+) channel-activity, establishing a positive feedback loop that induces PtdIns(4,5)P2 microdomain at the periactive zone. These microdomains trigger bulk membrane invagination (i.e. ADBE) by triggering actin polymerization while also promoting localization of fwe to bulk endosomes, thereby removing the ADBE trigger to reduce endocytosis and prevent excess membrane uptake. PtdIns(4,5)P2 then promotes SV reformation from the bulk endosomes, to coordinate ADBE and subsequent SV reformation. Different combinations of the flower isoforms at the cell membrane are also required for the identification and elimination of suboptimal or supernumerary cells during development, regeneration, and adulthood. Required for the recognition and elimination of unfit cells in the developing wing during cell competition. In the developing pupal retina, mediates the elimination of unwanted postmitotic neurons, including supernumerary photoreceptor neurons that form at the periphery of the retina and are contained within incomplete ommatidia units. Also required for efficient elimination and replacement of old neurons by newly generated neurons during regeneration in the adult brain following mechanical injury. Downstream of the flower fitness fingerprints, cells identified as unwanted or unfit are eliminated via apoptosis through the expression of ahuizotl (azot). However, the cells marked for elimination by the flower isoforms only undergo apoptosis if additional thresholds are met; (1) their neighboring fit/healthy cells express different levels of the fwe isoforms, and (2) the levels of the protective signal SPARC expressed by the loser or unwanted cells are unable to inhibit caspase activation. These additional thresholds for flower-mediated apoptosis, allows useful cells to recover from transient and limited stress before they are unnecessarily eliminated. Functions with dally and magu in a mechanism of scaling, which utilises apoptosis to ensure that the dpp morphogen gradient, which mediates organ growth, remains proportional to the size of the growing wing. In this mechanism, fwe represses dally- and Magu-dependent activity in expanding the gradient, and dally/Magu inhibits fwe-dependent apoptosis to keep cell death rate low. When the levels of these different proteins are optimally regulated the gradient correctly scales with organ growth but when this fails, fwe-mediated apoptosis is activated to trim the developing tissue to match the correct size of the gradient. This is Calcium channel flower from Drosophila erecta (Fruit fly).